The primary structure comprises 205 residues: Putative lipoprotein LppC (205 aa).

An N-terminal signal peptide occupies residues 1–27 (MESPMTSTLHRTPLATAGLALVVALGG). C28 carries the N-palmitoyl cysteine lipid modification. Residue C28 is the site of S-diacylglycerol cysteine attachment. Positions 126–145 (GSTADGQTPAGGHSVPNSGG) are disordered.

The protein belongs to the UPF0098 family.

The protein localises to the cell membrane. This chain is Putative lipoprotein LppC (lppC), found in Mycobacterium tuberculosis (strain CDC 1551 / Oshkosh).